Here is a 677-residue protein sequence, read N- to C-terminus: Methionine--tRNA ligase (677 aa).

Positions 15–25 (PYANGSIHLGH) match the 'HIGH' region motif. Zn(2+) contacts are provided by cysteine 146, cysteine 149, cysteine 159, and cysteine 162. Positions 333-337 (KMSKS) match the 'KMSKS' region motif. ATP is bound at residue lysine 336. A tRNA-binding domain is found at 575–677 (DFAKVDLRVA…AGAKPGHQVK (103 aa)).

Belongs to the class-I aminoacyl-tRNA synthetase family. MetG type 1 subfamily. As to quaternary structure, homodimer. The cofactor is Zn(2+).

The protein resides in the cytoplasm. It catalyses the reaction tRNA(Met) + L-methionine + ATP = L-methionyl-tRNA(Met) + AMP + diphosphate. Is required not only for elongation of protein synthesis but also for the initiation of all mRNA translation through initiator tRNA(fMet) aminoacylation. The protein is Methionine--tRNA ligase of Escherichia coli (strain UTI89 / UPEC).